The primary structure comprises 286 residues: Bifunctional protein FolD (286 aa).

NADP(+)-binding positions include 164–166 and I230; that span reads GTS.

It belongs to the tetrahydrofolate dehydrogenase/cyclohydrolase family. As to quaternary structure, homodimer.

It catalyses the reaction (6R)-5,10-methylene-5,6,7,8-tetrahydrofolate + NADP(+) = (6R)-5,10-methenyltetrahydrofolate + NADPH. It carries out the reaction (6R)-5,10-methenyltetrahydrofolate + H2O = (6R)-10-formyltetrahydrofolate + H(+). It functions in the pathway one-carbon metabolism; tetrahydrofolate interconversion. Functionally, catalyzes the oxidation of 5,10-methylenetetrahydrofolate to 5,10-methenyltetrahydrofolate and then the hydrolysis of 5,10-methenyltetrahydrofolate to 10-formyltetrahydrofolate. This is Bifunctional protein FolD from Mesoplasma florum (strain ATCC 33453 / NBRC 100688 / NCTC 11704 / L1) (Acholeplasma florum).